We begin with the raw amino-acid sequence, 155 residues long: Ribonuclease H (155 aa).

One can recognise an RNase H type-1 domain in the interval 9–150; the sequence is DGQQVEMWTD…ADALANQGME (142 aa). Residues Asp-18, Glu-56, Asp-78, and Asp-142 each contribute to the Mg(2+) site.

Belongs to the RNase H family. As to quaternary structure, monomer. It depends on Mg(2+) as a cofactor.

The protein localises to the cytoplasm. The catalysed reaction is Endonucleolytic cleavage to 5'-phosphomonoester.. Its function is as follows. Endonuclease that specifically degrades the RNA of RNA-DNA hybrids. In Bordetella pertussis (strain Tohama I / ATCC BAA-589 / NCTC 13251), this protein is Ribonuclease H.